Reading from the N-terminus, the 1081-residue chain is Serine/threonine-protein kinase PKH2 (1081 aa).

Position 138 is a phosphoserine (Ser-138). Positions 179–443 (FKFGSVIGDG…ISQIKEHHFF (265 aa)) constitute a Protein kinase domain. Residues 189 to 191 (AYS) and Lys-208 each bind ATP. The tract at residues 210–255 (LNKEYLIRQKKVKYVSIEKTALQKLNNSPSVVRLFSTFQDESSLYF) is PIF-pocket. ATP is bound by residues 258–260 (EYA) and Asp-264. The active-site Proton acceptor is the Asp-303. Residues Glu-307 and Asp-321 each coordinate ATP. Residues 494-526 (HLVTQRSASSPSVEETTHSTLYNNNTHASTESE) show a composition bias toward polar residues. Disordered regions lie at residues 494–652 (HLVT…TYQM), 805–833 (NRSG…NKGS), and 970–1017 (IERR…INSA). Positions 527-538 (ISIKKRPTDERT) are enriched in basic and acidic residues. 2 stretches are compositionally biased toward low complexity: residues 564–575 (AASAALAASAAL) and 582–602 (SYPT…TSRP). Ser-619 carries the phosphoserine modification. Residues 632-645 (PMPPYTPPMSPPMT) show a composition bias toward pro residues. 2 stretches are compositionally biased toward polar residues: residues 805 to 819 (NRSG…NSSP) and 998 to 1017 (HSQS…INSA). Phosphoserine is present on Ser-1009.

Belongs to the protein kinase superfamily. AGC Ser/Thr protein kinase family. PDPK1 subfamily.

It is found in the nucleus. The protein resides in the cytoplasm. Its subcellular location is the cell cortex. The enzyme catalyses L-seryl-[protein] + ATP = O-phospho-L-seryl-[protein] + ADP + H(+). The catalysed reaction is L-threonyl-[protein] + ATP = O-phospho-L-threonyl-[protein] + ADP + H(+). Its activity is regulated as follows. Sphingoid base activates kinase activity. Functionally, serine/threonine-protein kinase which is part sphingolipid-mediated signaling pathway that is required for the internalization step of endocytosis by regulating eisosome assembly and organization, and modulating the organization of the plasma membrane. Phosphorylates and activates PKC1. Activates YPK1 and YPK2, 2 components of signaling cascade required for maintenance of cell wall integrity. Required for stress-induced P-body assembly and regulates global mRNA decay at the deadenylation step. This is Serine/threonine-protein kinase PKH2 (PKH2) from Saccharomyces cerevisiae (strain ATCC 204508 / S288c) (Baker's yeast).